A 105-amino-acid polypeptide reads, in one-letter code: Thioredoxin (105 aa).

Positions 1–105 (MANNVTDSSF…SLLDWINKSI (105 aa)) constitute a Thioredoxin domain. Cysteine 30 and cysteine 33 are oxidised to a cystine.

It belongs to the thioredoxin family.

Functionally, component of the thioredoxin-thioredoxin reductase system. Participates in various redox reactions through the reversible oxidation of its active center dithiol to a disulfide and catalyzes dithiol-disulfide exchange reactions. The chain is Thioredoxin (trxA) from Rickettsia felis (strain ATCC VR-1525 / URRWXCal2) (Rickettsia azadi).